Consider the following 491-residue polypeptide: UDP-N-acetylmuramate--L-alanine ligase (491 aa).

126–132 (GTHGKTT) contributes to the ATP binding site.

Belongs to the MurCDEF family.

The protein resides in the cytoplasm. It carries out the reaction UDP-N-acetyl-alpha-D-muramate + L-alanine + ATP = UDP-N-acetyl-alpha-D-muramoyl-L-alanine + ADP + phosphate + H(+). Its pathway is cell wall biogenesis; peptidoglycan biosynthesis. In terms of biological role, cell wall formation. This is UDP-N-acetylmuramate--L-alanine ligase from Shigella sonnei (strain Ss046).